The primary structure comprises 137 residues: 6,7-dimethyl-8-ribityllumazine synthase (137 aa).

5-amino-6-(D-ribitylamino)uracil is bound by residues Phe11, Ser43–Asp45, and Cys67–Ile69. Asp72 to Thr73 lines the (2S)-2-hydroxy-3-oxobutyl phosphate pocket. His75 serves as the catalytic Proton donor. Leu100 is a 5-amino-6-(D-ribitylamino)uracil binding site. Residue Arg115 participates in (2S)-2-hydroxy-3-oxobutyl phosphate binding.

The protein belongs to the DMRL synthase family. Forms an icosahedral capsid composed of 60 subunits, arranged as a dodecamer of pentamers.

The catalysed reaction is (2S)-2-hydroxy-3-oxobutyl phosphate + 5-amino-6-(D-ribitylamino)uracil = 6,7-dimethyl-8-(1-D-ribityl)lumazine + phosphate + 2 H2O + H(+). It participates in cofactor biosynthesis; riboflavin biosynthesis; riboflavin from 2-hydroxy-3-oxobutyl phosphate and 5-amino-6-(D-ribitylamino)uracil: step 1/2. Functionally, catalyzes the formation of 6,7-dimethyl-8-ribityllumazine by condensation of 5-amino-6-(D-ribitylamino)uracil with 3,4-dihydroxy-2-butanone 4-phosphate. This is the penultimate step in the biosynthesis of riboflavin. In Methanococcus maripaludis (strain C6 / ATCC BAA-1332), this protein is 6,7-dimethyl-8-ribityllumazine synthase.